Here is a 107-residue protein sequence, read N- to C-terminus: Anti-adapter protein IraM (107 aa).

It belongs to the IraM/RssC family.

It localises to the cytoplasm. Inhibits RpoS proteolysis by regulating RssB activity, thereby increasing the stability of the sigma stress factor RpoS during magnesium starvation. In Escherichia coli O17:K52:H18 (strain UMN026 / ExPEC), this protein is Anti-adapter protein IraM.